Reading from the N-terminus, the 22-residue chain is Mu-conotoxin CnIIIA (22 aa).

Cystine bridges form between cysteine 3-cysteine 15, cysteine 4-cysteine 21, and cysteine 10-cysteine 22. Cysteine 22 carries the cysteine amide modification.

This sequence belongs to the conotoxin M superfamily. In terms of tissue distribution, expressed by the venom duct. Has not been isolated from the crude venom.

It localises to the secreted. Its function is as follows. Mu-conotoxins block voltage-gated sodium channels (Nav). This synthetic toxin moderately blocks rNav1.1/SCN1A, rNav1.2/SCN2A, rNav1.3/SCN3A, rNav1.4/SCN4A, rNav1.5/SCN5A, and mNav1.6/SCN8A. This block is very slowly reversible. Causes seizures when injected intracranially into mice. The sequence is that of Mu-conotoxin CnIIIA from Conus consors (Singed cone).